Reading from the N-terminus, the 352-residue chain is MLELNFSQTLGNHCLTINETLPANGITAIFGVSGAGKTSLINAISGLTRPQKGRIVLNGRVLNDAEKGICLTPEKRRVGYVFQDARLFPHYKVRGNLRYGMAKSMVDQFDKLVALLGIEPLLDRLPGSLSGGEKQRVAIGRALLTAPELLLLDEPLASLDIPRKRELLPYLQRLTREINIPMLYVSHSLDEILHLADRVMVLENGQVKAFGALEEVWGSSVMNPWLPKEQQSSILKVTVLEHHPHYAMTALALGDQHLWVNKLDEPLQAALRIRIQASDVSLVLQPPQQTSIRNVLRAKVVNSYDDNGQVEVELEVGGKTLWARISPWARDELVIKPGLWLYAQIKSVSITA.

The ABC transporter domain maps to 1–229 (MLELNFSQTL…SVMNPWLPKE (229 aa)). 31–38 (GVSGAGKT) contributes to the ATP binding site. One can recognise a Mop domain in the interval 289–352 (QTSIRNVLRA…AQIKSVSITA (64 aa)).

Belongs to the ABC transporter superfamily. Molybdate importer (TC 3.A.1.8) family. In terms of assembly, the complex is composed of two ATP-binding proteins (ModC), two transmembrane proteins (ModB) and a solute-binding protein (ModA).

It is found in the cell inner membrane. The enzyme catalyses molybdate(out) + ATP + H2O = molybdate(in) + ADP + phosphate + H(+). Functionally, part of the ABC transporter complex ModABC involved in molybdenum import. Responsible for energy coupling to the transport system. This Shigella dysenteriae serotype 1 (strain Sd197) protein is Molybdenum import ATP-binding protein ModC.